The chain runs to 374 residues: Erythronate-4-phosphate dehydrogenase (374 aa).

Residues serine 45 and threonine 67 each contribute to the substrate site. Aspartate 147 provides a ligand contact to NAD(+). Arginine 208 is a catalytic residue. Aspartate 232 contacts NAD(+). Glutamate 237 is a catalytic residue. Residue histidine 254 is the Proton donor of the active site. Glycine 257 is a binding site for NAD(+).

The protein belongs to the D-isomer specific 2-hydroxyacid dehydrogenase family. PdxB subfamily. Homodimer.

Its subcellular location is the cytoplasm. The enzyme catalyses 4-phospho-D-erythronate + NAD(+) = (R)-3-hydroxy-2-oxo-4-phosphooxybutanoate + NADH + H(+). It functions in the pathway cofactor biosynthesis; pyridoxine 5'-phosphate biosynthesis; pyridoxine 5'-phosphate from D-erythrose 4-phosphate: step 2/5. Functionally, catalyzes the oxidation of erythronate-4-phosphate to 3-hydroxy-2-oxo-4-phosphonooxybutanoate. This is Erythronate-4-phosphate dehydrogenase from Pseudoalteromonas atlantica (strain T6c / ATCC BAA-1087).